A 45-amino-acid chain; its full sequence is Myotoxin-3 (45 aa).

3 disulfides stabilise this stretch: C4/C36, C11/C30, and C18/C37.

As to quaternary structure, monomer. As to expression, expressed by the venom gland.

It localises to the secreted. Functionally, cationic peptide that possesses multiple functions. It acts as a cell-penetrating peptide (CPP), and as a potent voltage-gated potassium channel (Kv) inhibitor. It exhibits antimicrobial activities, hind limb paralysis, and severe muscle necrosis by a non-enzymatic mechanism. The protein is Myotoxin-3 of Crotalus viridis viridis (Prairie rattlesnake).